Reading from the N-terminus, the 147-residue chain is MRYKMKVRFKYYEFQGGIYQTCGVYESDNEENDGVITDYLSTIPGSYADNGFKVLAAVKDPTITRDWISSQAFDALIEHDQIKVGFYLLDDMEEEDIPDDVDERDTAPRFIPRKEFAYLLEKWLDFYHRPITDINYQEIIDTKEAYL.

This sequence belongs to the UPF0275 family.

The polypeptide is UPF0275 protein PM0504 (Pasteurella multocida (strain Pm70)).